The primary structure comprises 160 residues: Large ribosomal subunit protein bL17 (160 aa).

Residues 123–141 (DEKRQKRAEARAKRREEMQ) are compositionally biased toward basic and acidic residues. The tract at residues 123 to 160 (DEKRQKRAEARAKRREEMQKAMAEQQQAEGGEPEGGNE) is disordered. Low complexity predominate over residues 142 to 152 (KAMAEQQQAEG).

Belongs to the bacterial ribosomal protein bL17 family. Part of the 50S ribosomal subunit. Contacts protein L32.

This Acidobacterium capsulatum (strain ATCC 51196 / DSM 11244 / BCRC 80197 / JCM 7670 / NBRC 15755 / NCIMB 13165 / 161) protein is Large ribosomal subunit protein bL17.